The primary structure comprises 226 residues: Putative pyridoxamine 5'-phosphate oxidase (226 aa).

16-19 (LNSH) is a pyridoxal 5'-phosphate binding site. 72 to 75 (RMVL) is a binding site for FMN. Position 77 (lysine 77) interacts with pyridoxal 5'-phosphate. FMN contacts are provided by residues 87 to 88 (YT), 93 to 94 (RK), and glutamine 116. Pyridoxal 5'-phosphate contacts are provided by tyrosine 134, arginine 138, and serine 142. FMN is bound by residues 151 to 152 (QS) and tryptophan 199. Position 205–207 (205–207 (RLH)) interacts with pyridoxal 5'-phosphate. Residue arginine 209 participates in FMN binding.

The protein belongs to the pyridoxamine 5'-phosphate oxidase family. In terms of assembly, homodimer. The cofactor is FMN.

It catalyses the reaction pyridoxamine 5'-phosphate + O2 + H2O = pyridoxal 5'-phosphate + H2O2 + NH4(+). The enzyme catalyses pyridoxine 5'-phosphate + O2 = pyridoxal 5'-phosphate + H2O2. It functions in the pathway cofactor metabolism; pyridoxal 5'-phosphate salvage; pyridoxal 5'-phosphate from pyridoxamine 5'-phosphate: step 1/1. It participates in cofactor metabolism; pyridoxal 5'-phosphate salvage; pyridoxal 5'-phosphate from pyridoxine 5'-phosphate: step 1/1. In terms of biological role, catalyzes the oxidation of either pyridoxine 5'-phosphate (PNP) or pyridoxamine 5'-phosphate (PMP) into pyridoxal 5'-phosphate (PLP). This Caenorhabditis elegans protein is Putative pyridoxamine 5'-phosphate oxidase.